A 191-amino-acid polypeptide reads, in one-letter code: Small ribosomal subunit protein uS11m (191 aa).

The tract at residues 37–62 (PRLEDSAARQNTEREAAPSRFSLYPP) is disordered. The segment covering 38–53 (RLEDSAARQNTEREAA) has biased composition (basic and acidic residues).

This sequence belongs to the universal ribosomal protein uS11 family. Component of the mitochondrial ribosome small subunit (28S) which comprises a 12S rRNA and about 30 distinct proteins.

It localises to the mitochondrion. This chain is Small ribosomal subunit protein uS11m (Mrps11), found in Mus musculus (Mouse).